Reading from the N-terminus, the 251-residue chain is Probable transcriptional regulatory protein MAB_2888c (251 aa).

Residues 1–20 form a disordered region; that stretch reads MSGHSKWATTKHQKAVKDAR.

It belongs to the TACO1 family.

Its subcellular location is the cytoplasm. In Mycobacteroides abscessus (strain ATCC 19977 / DSM 44196 / CCUG 20993 / CIP 104536 / JCM 13569 / NCTC 13031 / TMC 1543 / L948) (Mycobacterium abscessus), this protein is Probable transcriptional regulatory protein MAB_2888c.